The sequence spans 576 residues: Arginine--tRNA ligase (576 aa).

The 'HIGH' region motif lies at 122–132; the sequence is PNVAKEMHVGH.

The protein belongs to the class-I aminoacyl-tRNA synthetase family. As to quaternary structure, monomer.

It localises to the cytoplasm. It catalyses the reaction tRNA(Arg) + L-arginine + ATP = L-arginyl-tRNA(Arg) + AMP + diphosphate. The sequence is that of Arginine--tRNA ligase from Thermobifida fusca (strain YX).